Consider the following 130-residue polypeptide: Small ribosomal subunit protein uS4 (130 aa).

K64 bears the N6-acetyllysine mark. A Glycyl lysine isopeptide (Lys-Gly) (interchain with G-Cter in SUMO2) cross-link involves residue K91. In terms of domain architecture, S4 RNA-binding spans 106-130 (RRLQTQVFKLGLAXSIHHXRVLIRQ). The residue at position 114 (K114) is an N6-acetyllysine.

This sequence belongs to the universal ribosomal protein uS4 family. In terms of assembly, component of the small ribosomal subunit. Identified in a IGF2BP1-dependent mRNP granule complex containing untranslated mRNAs. Part of the small subunit (SSU) processome, composed of more than 70 proteins and the RNA chaperone small nucleolar RNA (snoRNA) U3.

The protein localises to the cytoplasm. The protein resides in the nucleus. Its subcellular location is the nucleolus. Functionally, component of the small ribosomal subunit. The ribosome is a large ribonucleoprotein complex responsible for the synthesis of proteins in the cell. Part of the small subunit (SSU) processome, first precursor of the small eukaryotic ribosomal subunit. During the assembly of the SSU processome in the nucleolus, many ribosome biogenesis factors, an RNA chaperone and ribosomal proteins associate with the nascent pre-rRNA and work in concert to generate RNA folding, modifications, rearrangements and cleavage as well as targeted degradation of pre-ribosomal RNA by the RNA exosome. The protein is Small ribosomal subunit protein uS4 (RPS9) of Sus scrofa (Pig).